Reading from the N-terminus, the 171-residue chain is uncharacterized protein (171 aa).

Residues 1–18 form the signal peptide; it reads MRYSKLTMLIPCALLLSA. Cys19 carries the N-palmitoyl cysteine lipid modification. Cys19 carries S-diacylglycerol cysteine lipidation.

It localises to the cell membrane. This is an uncharacterized protein from Escherichia coli (strain K12).